An 82-amino-acid chain; its full sequence is Small ribosomal subunit protein bS16 (82 aa).

The protein belongs to the bacterial ribosomal protein bS16 family.

In Natranaerobius thermophilus (strain ATCC BAA-1301 / DSM 18059 / JW/NM-WN-LF), this protein is Small ribosomal subunit protein bS16.